Consider the following 199-residue polypeptide: Large ribosomal subunit protein uL10 (199 aa).

Belongs to the universal ribosomal protein uL10 family. Part of the ribosomal stalk of the 50S ribosomal subunit. The N-terminus interacts with L11 and the large rRNA to form the base of the stalk. The C-terminus forms an elongated spine to which L12 dimers bind in a sequential fashion forming a multimeric L10(L12)X complex.

Functionally, forms part of the ribosomal stalk, playing a central role in the interaction of the ribosome with GTP-bound translation factors. This Aquifex aeolicus (strain VF5) protein is Large ribosomal subunit protein uL10 (rplJ).